Here is a 311-residue protein sequence, read N- to C-terminus: Methionyl-tRNA formyltransferase (311 aa).

112-115 (SLLP) lines the (6S)-5,6,7,8-tetrahydrofolate pocket.

The protein belongs to the Fmt family.

The enzyme catalyses L-methionyl-tRNA(fMet) + (6R)-10-formyltetrahydrofolate = N-formyl-L-methionyl-tRNA(fMet) + (6S)-5,6,7,8-tetrahydrofolate + H(+). Attaches a formyl group to the free amino group of methionyl-tRNA(fMet). The formyl group appears to play a dual role in the initiator identity of N-formylmethionyl-tRNA by promoting its recognition by IF2 and preventing the misappropriation of this tRNA by the elongation apparatus. In Rhizobium meliloti (strain 1021) (Ensifer meliloti), this protein is Methionyl-tRNA formyltransferase.